Here is a 348-residue protein sequence, read N- to C-terminus: ECA polysaccharide chain length modulation protein (348 aa).

Residues Met-1–Lys-30 are Cytoplasmic-facing. The chain crosses the membrane as a helical span at residues Leu-31–Ala-51. Residues Arg-52–Arg-322 lie on the Periplasmic side of the membrane. The chain crosses the membrane as a helical span at residues Ala-323 to Thr-343. The Cytoplasmic segment spans residues Arg-344–Lys-348.

The protein belongs to the WzzB/Cld/Rol family. In terms of assembly, homooctamer. Probably part of a complex composed of WzxE, WzyE and WzzE.

The protein localises to the cell inner membrane. It functions in the pathway bacterial outer membrane biogenesis; enterobacterial common antigen biosynthesis. Functionally, modulates the polysaccharide chain length of enterobacterial common antigen (ECA). The protein is ECA polysaccharide chain length modulation protein of Escherichia coli O157:H7.